The following is a 107-amino-acid chain: U1-lycotoxin-Ls1f (107 aa).

The first 20 residues, 1-20 (MMKVLVVVALLVTLISYSSS), serve as a signal peptide directing secretion. Positions 21–41 (EGIDDLEADELLSLMANEQTR) are excised as a propeptide. 4 disulfides stabilise this stretch: Cys44–Cys59, Cys51–Cys68, Cys58–Cys86, and Cys70–Cys84.

The protein belongs to the neurotoxin 19 (CSTX) family. 04 (U1-Lctx) subfamily. Expressed by the venom gland.

Its subcellular location is the secreted. This Lycosa singoriensis (Wolf spider) protein is U1-lycotoxin-Ls1f.